Here is a 396-residue protein sequence, read N- to C-terminus: Alanine racemase (396 aa).

Lys-46 functions as the Proton acceptor; specific for D-alanine in the catalytic mechanism. Lys-46 is modified (N6-(pyridoxal phosphate)lysine). Arg-145 lines the substrate pocket. Tyr-280 (proton acceptor; specific for L-alanine) is an active-site residue. Met-328 contacts substrate.

This sequence belongs to the alanine racemase family. It depends on pyridoxal 5'-phosphate as a cofactor.

It carries out the reaction L-alanine = D-alanine. Its pathway is amino-acid biosynthesis; D-alanine biosynthesis; D-alanine from L-alanine: step 1/1. Functionally, catalyzes the interconversion of L-alanine and D-alanine. May also act on other amino acids. The chain is Alanine racemase (alr) from Brucella abortus (strain 2308).